The sequence spans 415 residues: Multifunctional CCA protein (415 aa).

ATP contacts are provided by glycine 8 and arginine 11. Residues glycine 8 and arginine 11 each coordinate CTP. Mg(2+)-binding residues include glutamate 21 and aspartate 23. ATP contacts are provided by arginine 91, arginine 137, and arginine 140. The CTP site is built by arginine 91, arginine 137, and arginine 140. The 102-residue stretch at alanine 228–phenylalanine 329 folds into the HD domain.

The protein belongs to the tRNA nucleotidyltransferase/poly(A) polymerase family. Bacterial CCA-adding enzyme type 1 subfamily. As to quaternary structure, monomer. Can also form homodimers and oligomers. Requires Mg(2+) as cofactor. The cofactor is Ni(2+).

The enzyme catalyses a tRNA precursor + 2 CTP + ATP = a tRNA with a 3' CCA end + 3 diphosphate. It carries out the reaction a tRNA with a 3' CCA end + 2 CTP + ATP = a tRNA with a 3' CCACCA end + 3 diphosphate. Its function is as follows. Catalyzes the addition and repair of the essential 3'-terminal CCA sequence in tRNAs without using a nucleic acid template. Adds these three nucleotides in the order of C, C, and A to the tRNA nucleotide-73, using CTP and ATP as substrates and producing inorganic pyrophosphate. tRNA 3'-terminal CCA addition is required both for tRNA processing and repair. Also involved in tRNA surveillance by mediating tandem CCA addition to generate a CCACCA at the 3' terminus of unstable tRNAs. While stable tRNAs receive only 3'-terminal CCA, unstable tRNAs are marked with CCACCA and rapidly degraded. This Halorhodospira halophila (strain DSM 244 / SL1) (Ectothiorhodospira halophila (strain DSM 244 / SL1)) protein is Multifunctional CCA protein.